The following is a 187-amino-acid chain: Elongation factor P (187 aa).

The protein belongs to the elongation factor P family.

The protein localises to the cytoplasm. It participates in protein biosynthesis; polypeptide chain elongation. Its function is as follows. Involved in peptide bond synthesis. Stimulates efficient translation and peptide-bond synthesis on native or reconstituted 70S ribosomes in vitro. Probably functions indirectly by altering the affinity of the ribosome for aminoacyl-tRNA, thus increasing their reactivity as acceptors for peptidyl transferase. The chain is Elongation factor P from Wolinella succinogenes (strain ATCC 29543 / DSM 1740 / CCUG 13145 / JCM 31913 / LMG 7466 / NCTC 11488 / FDC 602W) (Vibrio succinogenes).